Reading from the N-terminus, the 278-residue chain is MHKAGLLGLCARAWNSVRMASSGMTRRDPLANKVALVTASTDGIGFAIARRLAQDGAHVVVSSRKQQNVDQAVATLQGEGLSVTGTVCHVGKAEDRERLVATAVKLHGGIDILVSNAAVNPFFGSIMDVTEEVWDKTLDINVKAPALMTKAVVPEMEKRGGGSVVIVSSIAAFSPSPGFSPYNVSKTALLGLTKTLAIELAPRNIRVNCLAPGLIKTSFSRMLWMDKEKEESMKETLRIRRLGEPEDCAGIVSFLCSEDASYITGETVVVGGGTPSRL.

An NADP(+)-binding site is contributed by 36-60; the sequence is LVTASTDGIGFAIARRLAQDGAHVV. N6-acetyllysine; alternate is present on lysine 92. The residue at position 92 (lysine 92) is an N6-succinyllysine; alternate. Position 105 is an N6-acetyllysine (lysine 105). Phosphoserine is present on isoleucine 140. Position 169 (serine 169) interacts with substrate. Tyrosine 182 serves as the catalytic Proton acceptor. Lysine 186 lines the NADP(+) pocket. The residue at position 216 (lysine 216) is an N6-acetyllysine; alternate. Position 216 is an N6-succinyllysine; alternate (lysine 216). Phosphoserine is present on serine 220. An N6-succinyllysine mark is found at lysine 227 and lysine 234. Residues 276 to 278 carry the Peroxisomal targeting signal motif; it reads SRL.

This sequence belongs to the short-chain dehydrogenases/reductases (SDR) family. As to quaternary structure, homotetramer. Predominantly expressed in normal cervix (at protein level). In terms of tissue distribution, expressed in some neoplastic cervical tissues, but not in normal cervix (at protein level). As to expression, expressed in a few neoplastic cervical tissues. High expression in liver.

It is found in the peroxisome. Its subcellular location is the nucleus. It carries out the reaction a secondary alcohol + NADP(+) = a ketone + NADPH + H(+). It catalyses the reaction 3beta-hydroxy-5beta-pregnane-20-one + NADP(+) = 5beta-pregnan-3,20-dione + NADPH + H(+). The enzyme catalyses 5beta-dihydrotestosterone + NADPH + H(+) = 5beta-androstane-3beta,17beta-diol + NADP(+). The catalysed reaction is 5beta-androstane-3,17-dione + NADPH + H(+) = 3beta-hydroxy-5beta-androstane-17-one + NADP(+). It carries out the reaction isatin + NADPH + H(+) = 3-hydroxyindolin-2-one + NADP(+). It catalyses the reaction lithocholate + NADP(+) = 3-oxo-5beta-cholan-24-oate + NADPH + H(+). The enzyme catalyses 3-oxo-5beta-cholan-24-oate + NADPH + H(+) = isolithocholate + NADP(+). With respect to regulation, inhibited by flavonoids (quercetin and genistein), cetylpyridium chloride, phenylhexane and valproic acid. Low inhibition is observed with fatty acids (myristic acid and lauric acid). No significant inhibition is observed with barbital, dicumarol, indomethacin, metyrapone, ethacrynic acid, disulfiram, hexestrol and benzodiazepines (diazepam and nitrazepam). In terms of biological role, NADPH-dependent oxidoreductase which catalyzes the reduction of a variety of compounds bearing carbonyl groups including ketosteroids, alpha-dicarbonyl compounds, aldehydes, aromatic ketones and quinones. Reduces 3-ketosteroids and benzil into 3beta-hydroxysteroids and R-benzoin, respectively, in contrast to the stereoselectivity of non-primate DHRS4s which produce 3alpha-hydroxysteroids and S-benzoin. Diplays low activity toward all-trans-retinal and no activity toward 9-cis-retinal as compared to non-primate mammals. In the reverse reaction, catalyze the NAD-dependent oxidation of 3beta-hydroxysteroids and alcohol, but with much lower efficiency. Involved in the metabolism of 3beta-hydroxysteroids, isatin and xenobiotic carbonyl compounds. No detected catalytic activity in vitro, possibly due to the lack of catalytic site. Its function is as follows. NADPH-dependent oxidoreductase which catalyzes the reduction of a variety of compounds bearing carbonyl groups including ketosteroids, alpha-dicarbonyl compounds, aldehydes, aromatic ketones and quinones. Involved in the metabolism of 3beta-hydroxysteroids, isatin and xenobiotic carbonyl compounds. Has a higher catalytic activity for xenobiotic alpha-dicarbonyl compounds, sucha as benzil, than isoform 1 and is involved in benzil detoxification. This chain is Dehydrogenase/reductase SDR family member 4, found in Homo sapiens (Human).